The sequence spans 110 residues: uncharacterized protein (110 aa).

Disordered stretches follow at residues 1–42 and 66–110; these read MEWG…RAQQ and RQLG…AAEP. The stretch at 36–68 forms a coiled coil; that stretch reads REERAQQLLDAVEQRQRQLLDTIAACEEMLRQL.

This is an uncharacterized protein from Homo sapiens (Human).